The following is a 240-amino-acid chain: UDP-2,3-diacylglucosamine hydrolase (240 aa).

Mn(2+) contacts are provided by Asp-9, His-11, Asp-43, Asn-81, and His-116. 81–82 (NR) serves as a coordination point for substrate. The substrate site is built by Asp-124, Ser-162, Lys-166, Lys-169, and His-197. Residues His-197 and His-199 each contribute to the Mn(2+) site.

It belongs to the LpxH family. Requires Mn(2+) as cofactor.

It is found in the cell inner membrane. The catalysed reaction is UDP-2-N,3-O-bis[(3R)-3-hydroxytetradecanoyl]-alpha-D-glucosamine + H2O = 2-N,3-O-bis[(3R)-3-hydroxytetradecanoyl]-alpha-D-glucosaminyl 1-phosphate + UMP + 2 H(+). It functions in the pathway glycolipid biosynthesis; lipid IV(A) biosynthesis; lipid IV(A) from (3R)-3-hydroxytetradecanoyl-[acyl-carrier-protein] and UDP-N-acetyl-alpha-D-glucosamine: step 4/6. Hydrolyzes the pyrophosphate bond of UDP-2,3-diacylglucosamine to yield 2,3-diacylglucosamine 1-phosphate (lipid X) and UMP by catalyzing the attack of water at the alpha-P atom. Involved in the biosynthesis of lipid A, a phosphorylated glycolipid that anchors the lipopolysaccharide to the outer membrane of the cell. This chain is UDP-2,3-diacylglucosamine hydrolase, found in Neisseria meningitidis serogroup B (strain ATCC BAA-335 / MC58).